A 400-amino-acid chain; its full sequence is Malonyl CoA-acyl carrier protein transacylase (400 aa).

Active-site residues include Ser92 and His201.

Belongs to the FabD family.

It carries out the reaction holo-[ACP] + malonyl-CoA = malonyl-[ACP] + CoA. In terms of biological role, is involved in the mycosubtilin synthetase assembly, by catalyzing the transfer of malonyl groups to a specific acyl-carrier-protein domain on MycA. This Bacillus subtilis protein is Malonyl CoA-acyl carrier protein transacylase (fenF).